The following is a 604-amino-acid chain: Aspartate--tRNA(Asp/Asn) ligase (604 aa).

Glu-175 contributes to the L-aspartate binding site. The interval 199–202 (QQFK) is aspartate. 2 residues coordinate L-aspartate: Arg-221 and His-456. 221–223 (RDE) serves as a coordination point for ATP. Glu-496 is an ATP binding site. Arg-503 is a binding site for L-aspartate. 548–551 (GVDR) serves as a coordination point for ATP.

The protein belongs to the class-II aminoacyl-tRNA synthetase family. Type 1 subfamily. As to quaternary structure, homodimer.

It is found in the cytoplasm. The catalysed reaction is tRNA(Asx) + L-aspartate + ATP = L-aspartyl-tRNA(Asx) + AMP + diphosphate. Its function is as follows. Aspartyl-tRNA synthetase with relaxed tRNA specificity since it is able to aspartylate not only its cognate tRNA(Asp) but also tRNA(Asn). Reaction proceeds in two steps: L-aspartate is first activated by ATP to form Asp-AMP and then transferred to the acceptor end of tRNA(Asp/Asn). The protein is Aspartate--tRNA(Asp/Asn) ligase of Methylorubrum extorquens (strain CM4 / NCIMB 13688) (Methylobacterium extorquens).